A 228-amino-acid polypeptide reads, in one-letter code: Translin (228 aa).

The DNA/RNA binding stretch occupies residues 86–90 (RFHEH). The tract at residues 177–198 (LDSGFRLLNLKNDSLRKRYDGL) is leucine-zipper. Residue Lys187 is modified to N6-acetyllysine. Ser190 carries the phosphoserine modification. Lys199 carries the post-translational modification N6-acetyllysine.

The protein belongs to the translin family. In terms of assembly, ring-shaped heterooctamer of six TSN and two TSNAX subunits, DNA/RNA binding occurs inside the ring.

Its subcellular location is the cytoplasm. It localises to the nucleus. In terms of biological role, DNA-binding protein that specifically recognizes consensus sequences at the breakpoint junctions in chromosomal translocations, mostly involving immunoglobulin (Ig)/T-cell receptor gene segments. Seems to recognize single-stranded DNA ends generated by staggered breaks occurring at recombination hot spots. Exhibits both single-stranded and double-stranded endoribonuclease activity. May act as an activator of RNA-induced silencing complex (RISC) by facilitating endonucleolytic cleavage of the siRNA passenger strand. The chain is Translin (TSN) from Pongo abelii (Sumatran orangutan).